Consider the following 325-residue polypeptide: Oligopeptide transport system permease protein OppB (325 aa).

6 helical membrane-spanning segments follow: residues 12–32 (YLVL…LAFS), 102–122 (LVVG…WGAI), 135–155 (LALL…ILGA), 189–208 (LQHL…AGFS), 248–268 (IPMA…AVFV), and 290–310 (TNIV…AGLL). Residues 95–311 (IGVSLRLLVV…AVVLLAGLLS (217 aa)) form the ABC transmembrane type-1 domain.

The protein belongs to the binding-protein-dependent transport system permease family. OppBC subfamily. As to quaternary structure, the complex is composed of an ATP-binding protein (OppD), two transmembrane proteins (OppB and OppC) and a solute-binding protein (OppA).

It is found in the cell inner membrane. In terms of biological role, part of the ABC transporter complex OppABCD involved in the uptake of oligopeptides. Responsible for the translocation of the substrate across the membrane. In Mycobacterium bovis (strain ATCC BAA-935 / AF2122/97), this protein is Oligopeptide transport system permease protein OppB.